Here is a 307-residue protein sequence, read N- to C-terminus: Barttin (307 aa).

Residues 1-5 (MADEK) lie on the Cytoplasmic side of the membrane. The segment at 1–72 (MADEKTFRIG…VPADSDFQGI (72 aa)) is regulates channel membrane trafficking and anion conductance. Residues 6 to 26 (TFRIGFIVLGLFLLSLGTFLM) traverse the membrane as a helical segment. Over 27-32 (SHDRPQ) the chain is Extracellular. A helical transmembrane segment spans residues 33 to 53 (VYGTFYAMGSVMVIGGVIWSM). S-palmitoyl cysteine attachment occurs at residues Cys54 and Cys56. Topologically, residues 54-307 (CQCYPKITFV…ELGFEPDIQG (254 aa)) are cytoplasmic. Residues Ser79 and Ser107 each carry the phosphoserine modification. Disordered stretches follow at residues 135–154 (TGAS…WMEA) and 161–224 (GSDE…RGPL). Positions 161–171 (GSDENEGEKSH) are enriched in basic and acidic residues. Ser162 is modified (phosphoserine). Positions 172–183 (SQSSPSVGPQGS) are enriched in low complexity. Over residues 198 to 207 (SEGSSLQPSP) the composition is skewed to polar residues. A phosphoserine mark is found at Ser228 and Ser289. A disordered region spans residues 255–307 (RKQQWSLRMKGETVQARAEEPEQEEEDLYYGLPDSPGNPLPDKELGFEPDIQG).

In terms of assembly, interacts with CLCNK channels. Forms probably heteromers with CLCNKA in the thin ascending limb of Henle and with CLCNKB in the thick ascending limb and more distal segments. In terms of processing, palmitoylation is necessary for activation of plasma membrane-inserted CLC-K/barttin channels. Expression is evident in inner and outer stripes of the outer medulla of the kidney, most probably representing thin limbs of Henle's loop together with some collecting duct coursing through the outer stripe. In situ hybridization in fetal kidney at 18.5 dpc revealed a clear continuity between hybridization signals from the thin limb of Henle's loop and the distal convoluted tubule, suggesting that part of the expression pattern may result from expression in the thick ascending limb of Henle's loop. In addition, strong signals are present in a subset of cortical tubules, representing distal convoluted tubules or cortical collecting duct. Strong expression is also observed in the inner medulla of the kidney. This expression does not extend all the way to the tip of the papilla. Thus this signal most probably represents cells of the thin ascending limbs. In the inner ear, strong and exclusive expression is detected in marginal cells of the stria vascularis. In addition to cochlear signal, expression is observed in dark cells localized at the base of the crista ampullaris of the vestibular organ.

Its subcellular location is the basolateral cell membrane. In terms of biological role, regulatory subunit of anion-selective CLCNKA:BSND and CLCNKB:BSND heteromeric channels involved in basolateral chloride conductance along the nephron to achieve urine concentration and maintain systemic acid-base homeostasis, and in the stria vascularis of the inner ear to establish the endocochlear potential necessary for normal hearing. Most likely acts as a chaperone that allosterically regulates proper sorting of CLCNKA:BSND and CLCNKB:BSND channels at the basolateral plasma membrane domain and functional switch to ion conducting state. Mediates constitutive opening of channel common gates. The sequence is that of Barttin from Mus musculus (Mouse).